A 333-amino-acid chain; its full sequence is Adenosine deaminase (333 aa).

Zn(2+) contacts are provided by histidine 12 and histidine 14. Residues histidine 14, aspartate 16, and glycine 170 each contribute to the substrate site. Histidine 197 contributes to the Zn(2+) binding site. Glutamate 200 serves as the catalytic Proton donor. Aspartate 278 contributes to the Zn(2+) binding site. Aspartate 279 is a binding site for substrate.

This sequence belongs to the metallo-dependent hydrolases superfamily. Adenosine and AMP deaminases family. Adenosine deaminase subfamily. Zn(2+) serves as cofactor.

The enzyme catalyses adenosine + H2O + H(+) = inosine + NH4(+). The catalysed reaction is 2'-deoxyadenosine + H2O + H(+) = 2'-deoxyinosine + NH4(+). Catalyzes the hydrolytic deamination of adenosine and 2-deoxyadenosine. This Escherichia coli O7:K1 (strain IAI39 / ExPEC) protein is Adenosine deaminase.